Here is a 100-residue protein sequence, read N- to C-terminus: A-type ATP synthase subunit F (100 aa).

This sequence belongs to the V-ATPase F subunit family. In terms of assembly, has multiple subunits with at least A(3), B(3), C, D, E, F, H, I and proteolipid K(x).

The protein localises to the cell membrane. In terms of biological role, component of the A-type ATP synthase that produces ATP from ADP in the presence of a proton gradient across the membrane. The chain is A-type ATP synthase subunit F from Methanoregula boonei (strain DSM 21154 / JCM 14090 / 6A8).